Here is a 172-residue protein sequence, read N- to C-terminus: Nicotinamide-nucleotide adenylyltransferase (172 aa).

The protein belongs to the archaeal NMN adenylyltransferase family.

The protein localises to the cytoplasm. The catalysed reaction is beta-nicotinamide D-ribonucleotide + ATP + H(+) = diphosphate + NAD(+). It participates in cofactor biosynthesis; NAD(+) biosynthesis; NAD(+) from nicotinamide D-ribonucleotide: step 1/1. The chain is Nicotinamide-nucleotide adenylyltransferase from Aeropyrum pernix (strain ATCC 700893 / DSM 11879 / JCM 9820 / NBRC 100138 / K1).